The primary structure comprises 1103 residues: Mediator of RNA polymerase II transcription subunit 14 (1103 aa).

2 disordered regions span residues 22-61 (LNGVSSAPAGSSQLGNPVGLHNGSLPTNGVQHPDSRGSDE) and 1043-1067 (TTPKALDSRTSHDAPAANNQSPAIR). Over residues 23 to 36 (NGVSSAPAGSSQLG) the composition is skewed to polar residues.

The protein belongs to the Mediator complex subunit 14 family. Component of the Mediator complex.

The protein resides in the nucleus. Its function is as follows. Component of the Mediator complex, a coactivator involved in the regulated transcription of nearly all RNA polymerase II-dependent genes. Mediator functions as a bridge to convey information from gene-specific regulatory proteins to the basal RNA polymerase II transcription machinery. Mediator is recruited to promoters by direct interactions with regulatory proteins and serves as a scaffold for the assembly of a functional preinitiation complex with RNA polymerase II and the general transcription factors. The polypeptide is Mediator of RNA polymerase II transcription subunit 14 (rgr1) (Emericella nidulans (strain FGSC A4 / ATCC 38163 / CBS 112.46 / NRRL 194 / M139) (Aspergillus nidulans)).